A 79-amino-acid chain; its full sequence is Morintide mO1 (79 aa).

The signal sequence occupies residues 1–20 (MAKLSFLSLFLLCLVATATA). The 43-residue stretch at 21-63 (QNCGRQAGNRACANQLCCSQYGFCGSTSEYCSRANGCQSNCRG) folds into the Chitin-binding type-1 domain. Cystine bridges form between C23–C38, C32–C44, C37–C51, and C57–C61. Positions 64–79 (GGGADGAGGEAGGGGP) are excised as a propeptide.

Leaves (at protein level).

In terms of biological role, chitin-binding protein which functions in defense against chitin-containing fungal pathogens. Inhibits the growth of budding hyphae in A.alternata and A.brassiciola. The polypeptide is Morintide mO1 (Moringa oleifera (Horseradish tree)).